The chain runs to 430 residues: Vitamin B6 salvage pathway transcriptional repressor PtsJ (430 aa).

The 69-residue stretch at 4 to 72 (GKTANEIFDS…GRNGTVIKGS (69 aa)) folds into the HTH gntR-type domain. Residues 32 to 51 (VRELASELKVNRNTVAAAYK) constitute a DNA-binding region (H-T-H motif). A disordered region spans residues 70–95 (KGSPSPVALEGGDPHTPLHDLSGGNP). Lys282 is modified (N6-(pyridoxal phosphate)lysine).

In the C-terminal section; belongs to the class-I pyridoxal-phosphate-dependent aminotransferase family. Homodimer in both apo- and holo-forms.

In terms of biological role, acts as a transcriptional repressor of the pdxK gene, encoding a pyridoxal kinase involved in the vitamin B6 salvage pathway. Also represses transcription of its own gene. Binds to the ptsJ-pdxK intergenic region, but does not bind pdxY and pdxH promoters. Among all six B6 vitamers, only pyridoxal 5'-phosphate (PLP) clearly binds to the protein and acts as an effector molecule for PtsJ, inducing a protein conformational change that increases affinity for DNA. Thus, PLP stabilizes protein-DNA interactions, reinforcing repression. The sequence is that of Vitamin B6 salvage pathway transcriptional repressor PtsJ from Salmonella typhimurium (strain LT2 / SGSC1412 / ATCC 700720).